Reading from the N-terminus, the 178-residue chain is Cytidylate kinase (178 aa).

Residue 7 to 15 (GLPGTGTTT) coordinates ATP.

It belongs to the cytidylate kinase family. Type 2 subfamily.

It localises to the cytoplasm. The enzyme catalyses CMP + ATP = CDP + ADP. The catalysed reaction is dCMP + ATP = dCDP + ADP. This Methanococcus maripaludis (strain C7 / ATCC BAA-1331) protein is Cytidylate kinase.